The chain runs to 900 residues: DNA mismatch repair protein MutS (900 aa).

637-644 (GPNMAGKS) is an ATP binding site.

This sequence belongs to the DNA mismatch repair MutS family.

Its function is as follows. This protein is involved in the repair of mismatches in DNA. It is possible that it carries out the mismatch recognition step. This protein has a weak ATPase activity. The chain is DNA mismatch repair protein MutS from Methanosarcina barkeri (strain Fusaro / DSM 804).